The chain runs to 316 residues: Alkaline ceramidase YPC1 (316 aa).

At 1–36 (MGIFRWNYPESSVPGVWGETTSTIDWCEENYVVSPY) the chain is on the lumenal side. An intrachain disulfide couples C27 to C219. Residues 37–57 (IAEWSNTLTNSVFILSAIYTT) lie within the membrane without spanning it. The Lumenal portion of the chain corresponds to 58 to 68 (YSAYKNKLEKR). An intramembrane segment occupies 69 to 89 (FLLIGFGYGLVGVGSWLFHMT). Residues 90–93 (LKYR) lie on the Lumenal side of the membrane. Residues 94–114 (FQLLDELPMIYAMCIPTWSLV) form a helical membrane-spanning segment. At 115–135 (CEAKEALLNGDNHKKVPLFEQ) the chain is on the cytoplasmic side. A helical transmembrane segment spans residues 136 to 156 (IFIGVIIGLAVTTASILYVIY). Topologically, residues 157-160 (KNVD) are lumenal. Residues 161–181 (IHQILFGVQIVVVAATAGSLT) lie within the membrane without spanning it. The Lumenal portion of the chain corresponds to 182 to 195 (YRYVHDPLAKRNLK). An intramembrane segment occupies 196 to 216 (ASMALGAILFLSGYISWLLDI). Topologically, residues 217-228 (HYCSFWVHVRRS) are lumenal. The helical transmembrane segment at 229–249 (ILALPLGVLLEPHGWWHILTG) threads the bilayer. Residues 250–316 (MGIYFYIVSL…DQSIEVKKEK (67 aa)) are Cytoplasmic-facing.

The protein belongs to the alkaline ceramidase family.

The protein resides in the endoplasmic reticulum membrane. It carries out the reaction N-hexanoyl-sphinganine + H2O = hexanoate + sphinganine. It catalyses the reaction sphinganine + hexadecanoate = N-hexadecanoylsphinganine + H2O. The enzyme catalyses N-hexadecanoyl-(4R)-hydroxysphinganine + H2O = (4R)-hydroxysphinganine + hexadecanoate. The catalysed reaction is N-hexadecanoylsphing-4-enine + H2O = sphing-4-enine + hexadecanoate. It carries out the reaction an N-acyl-(4R)-4-hydroxysphinganine + H2O = (4R)-hydroxysphinganine + a fatty acid. Functionally, alkaline ceramidase that hydrolyzes phytoceramide and also dihydroceramide into phytosphingosine or dihydrosphingosine. Prefers phytoceramide. Also has reverse activity as acyl-CoA-independent ceramide synthase, catalyzing synthesis of phytoceramide and dihydroceramide from palmitic acid and phytosphingosine or dihydrosphingosine. Is not responsible for the breakdown of unsaturated ceramide. Preferentially uses very long chain fatty acids (C-24 and C-26) in vivo compared to C-16 in vitro. In Saccharomyces cerevisiae (strain ATCC 204508 / S288c) (Baker's yeast), this protein is Alkaline ceramidase YPC1 (YPC1).